Here is a 397-residue protein sequence, read N- to C-terminus: Phosphoglycerate kinase (397 aa).

Residues 21–23 (DFN), R37, 60–63 (HLGR), R119, and R152 contribute to the substrate site. Residues K203, G294, E325, and 354 to 357 (GGDS) each bind ATP.

The protein belongs to the phosphoglycerate kinase family. As to quaternary structure, monomer.

It localises to the cytoplasm. The catalysed reaction is (2R)-3-phosphoglycerate + ATP = (2R)-3-phospho-glyceroyl phosphate + ADP. It participates in carbohydrate degradation; glycolysis; pyruvate from D-glyceraldehyde 3-phosphate: step 2/5. The sequence is that of Phosphoglycerate kinase from Chlorobium limicola (strain DSM 245 / NBRC 103803 / 6330).